A 364-amino-acid polypeptide reads, in one-letter code: Histidinol-phosphate aminotransferase 2 (364 aa).

K223 bears the N6-(pyridoxal phosphate)lysine mark.

Belongs to the class-II pyridoxal-phosphate-dependent aminotransferase family. Histidinol-phosphate aminotransferase subfamily. Homodimer. It depends on pyridoxal 5'-phosphate as a cofactor.

The enzyme catalyses L-histidinol phosphate + 2-oxoglutarate = 3-(imidazol-4-yl)-2-oxopropyl phosphate + L-glutamate. Its pathway is amino-acid biosynthesis; L-histidine biosynthesis; L-histidine from 5-phospho-alpha-D-ribose 1-diphosphate: step 7/9. In Oceanobacillus iheyensis (strain DSM 14371 / CIP 107618 / JCM 11309 / KCTC 3954 / HTE831), this protein is Histidinol-phosphate aminotransferase 2 (hisC2).